A 934-amino-acid chain; its full sequence is MFYHGASANQHWIAVDDLSKVPVDVDHYNVVPFQFRRAGEYKEPVLSGIVELDEVKFVVSQSDAAEQWQQLTAEDGTVWRSRAYHGKLGKYSDMAVGAFNKVLNLVRGAETFDIALVTCAYIAMFYTLFNLFARMRAVGSKVWLGLSTLVSSFFAFLFALYITTRVLDLSIPFLSLSEGIPFFVAVVGFNNKILLAEKVLQNQLNAQSSKNDAPTVLYQALREQGPLLLRDHLFMITAFLGCSFYASYLDGLKNFCILAALILAFDILTTSTFLSAILSLKLEINQIHRSTLLREQLEDDGLTETTVDDVLKSNSLAGTKTFTDAPSTLVTVAKVAGVSVFFGLHFYGFGSAWLSDLSAGNETNDTFTLYDAVADQIPIGSNGTLVTLFPTRFFLPEKLSTQIEAVVLSFIGLISTAARDKYISKFILFAFAVSASINVYLLNVARIHTTRLEDAIELKKPKKKASKTAVSVPKAVVVKDSETTKSSEILHSSSESESEQSSRPLEQVIELYKDGKVKTLVDDEVVSLVTAGKLPLYALEKQLGDNLRAVAIRRKAISDLADAPVLRSNKLPYLHYDYDRVFGACCENVIGYMPLPVGVAGPLIIDGKPYHIPMATTEGCLVASAMRGCKAINLGGGVTTVLTKDGMTRGPCVKFPSLKRAGQCKLWLDSDEGQEEMKKAFNSTSRFARLQHLQTALAGDLLFIRFRTVTGDAMGMNMISKGVEYALKQMTEVFGWDDMMVVSVSGNYCTDKKPAAVNWINGRGKSVVAEASIPKDAVVKVLKSSVKAVVDVNVNKNLIGSAMAGSVGGFNAQAANMVTAVYLALGQDPAQNVESSNCITLMTETEDGDLKVSVSMPSIEVGTIGGGTILDPQGSMLELLGVRGPADVPGENARQLAKIVASIVLSGELSLVSALAAGHLVQSHMQHNRAAAKK.

Over 1–111 (MFYHGASANQ…VLNLVRGAET (111 aa)) the chain is Lumenal. Residues 112 to 132 (FDIALVTCAYIAMFYTLFNLF) form a helical membrane-spanning segment. One can recognise an SSD domain in the interval 113–280 (DIALVTCAYI…STFLSAILSL (168 aa)). The Cytoplasmic portion of the chain corresponds to 133-141 (ARMRAVGSK). A helical membrane pass occupies residues 142–162 (VWLGLSTLVSSFFAFLFALYI). Residues 163 to 168 (TTRVLD) lie on the Lumenal side of the membrane. Residues 169-189 (LSIPFLSLSEGIPFFVAVVGF) traverse the membrane as a helical segment. Topologically, residues 190–231 (NNKILLAEKVLQNQLNAQSSKNDAPTVLYQALREQGPLLLRD) are cytoplasmic. The helical transmembrane segment at 232 to 252 (HLFMITAFLGCSFYASYLDGL) threads the bilayer. Topologically, residues 253 to 256 (KNFC) are lumenal. A helical transmembrane segment spans residues 257–277 (ILAALILAFDILTTSTFLSAI). The Cytoplasmic portion of the chain corresponds to 278–334 (LSLKLEINQIHRSTLLREQLEDDGLTETTVDDVLKSNSLAGTKTFTDAPSTLVTVAK). A helical membrane pass occupies residues 335–355 (VAGVSVFFGLHFYGFGSAWLS). The Lumenal portion of the chain corresponds to 356 to 421 (DLSAGNETND…GLISTAARDK (66 aa)). N-linked (GlcNAc...) asparagine glycosylation is found at N361, N364, and N382. A helical membrane pass occupies residues 422–442 (YISKFILFAFAVSASINVYLL). Residues 443-934 (NVARIHTTRL…MQHNRAAAKK (492 aa)) lie on the Cytoplasmic side of the membrane. Catalysis depends on E618, which acts as the Charge relay system. 624-630 (SAMRGCK) serves as a coordination point for CoA. NADP(+) contacts are provided by residues 685–687 (SRF) and 712–720 (DAMGMNMIS). The Charge relay system role is filled by K752. Residue 781 to 783 (VLK) coordinates CoA. Catalysis depends on D828, which acts as the Charge relay system. Residue 923-924 (SH) participates in CoA binding. The active-site Proton donor is the H924. 928 to 929 (NR) serves as a coordination point for NADP(+).

This sequence belongs to the HMG-CoA reductase family.

It is found in the endoplasmic reticulum membrane. It catalyses the reaction (R)-mevalonate + 2 NADP(+) + CoA = (3S)-3-hydroxy-3-methylglutaryl-CoA + 2 NADPH + 2 H(+). Its pathway is metabolic intermediate biosynthesis; (R)-mevalonate biosynthesis; (R)-mevalonate from acetyl-CoA: step 3/3. HMG-CoA reductase; part of the first module of ergosterol biosynthesis pathway that includes the early steps of the pathway, conserved across all eukaryotes, and which results in the formation of mevalonate from acetyl-coenzyme A (acetyl-CoA). In this module, the cytosolic acetyl-CoA acetyltransferase catalyzes the formation of acetoacetyl-CoA. The hydroxymethylglutaryl-CoA synthase then condenses acetyl-CoA with acetoacetyl-CoA to form HMG-CoA. The rate-limiting step of the early module is the reduction to mevalonate by the 3-hydroxy-3-methylglutaryl-coenzyme A (HMG-CoA) reductase. The polypeptide is 3-hydroxy-3-methylglutaryl-coenzyme A reductase (Cyberlindnera jadinii (Torula yeast)).